We begin with the raw amino-acid sequence, 300 residues long: 33 kDa chaperonin (300 aa).

Cystine bridges form between Cys247-Cys249 and Cys280-Cys283.

It belongs to the HSP33 family. In terms of processing, under oxidizing conditions two disulfide bonds are formed involving the reactive cysteines. Under reducing conditions zinc is bound to the reactive cysteines and the protein is inactive.

It is found in the cytoplasm. Its function is as follows. Redox regulated molecular chaperone. Protects both thermally unfolding and oxidatively damaged proteins from irreversible aggregation. Plays an important role in the bacterial defense system toward oxidative stress. This is 33 kDa chaperonin from Prochlorococcus marinus (strain MIT 9312).